Reading from the N-terminus, the 183-residue chain is Translation initiation factor IF-3 (183 aa).

It belongs to the IF-3 family. As to quaternary structure, monomer.

The protein resides in the cytoplasm. In terms of biological role, IF-3 binds to the 30S ribosomal subunit and shifts the equilibrium between 70S ribosomes and their 50S and 30S subunits in favor of the free subunits, thus enhancing the availability of 30S subunits on which protein synthesis initiation begins. The polypeptide is Translation initiation factor IF-3 (Azobacteroides pseudotrichonymphae genomovar. CFP2).